A 314-amino-acid chain; its full sequence is Mitochondrial 2-oxoglutarate/malate carrier protein (314 aa).

At Ala2 the chain carries N-acetylalanine. Ser6 is subject to Phosphoserine. 3 Solcar repeats span residues Val23 to Arg108, Pro117 to Phe208, and Asp217 to Ala306. A helical membrane pass occupies residues Lys24–Leu42. Lys57 is subject to N6-succinyllysine. Lys73 is subject to N6-acetyllysine. Residues Gly83–Ile101 form a helical membrane-spanning segment. The residue at position 102 (Tyr102) is a Phosphotyrosine. Helical transmembrane passes span Phe119 to Ala140, Gly183 to Tyr202, and His222 to Val240. Residue Lys256 is modified to N6-acetyllysine. Residues Gly281–Leu300 traverse the membrane as a helical segment.

The protein belongs to the mitochondrial carrier (TC 2.A.29) family. Interacts with SMIM26.

Its subcellular location is the mitochondrion inner membrane. It carries out the reaction (S)-malate(in) + 2-oxoglutarate(out) = (S)-malate(out) + 2-oxoglutarate(in). The enzyme catalyses malonate(in) + 2-oxoglutarate(out) = malonate(out) + 2-oxoglutarate(in). The catalysed reaction is succinate(in) + 2-oxoglutarate(out) = succinate(out) + 2-oxoglutarate(in). It catalyses the reaction maleate(in) + 2-oxoglutarate(out) = maleate(out) + 2-oxoglutarate(in). It carries out the reaction oxaloacetate(in) + 2-oxoglutarate(out) = oxaloacetate(out) + 2-oxoglutarate(in). In terms of biological role, catalyzes the transport of 2-oxoglutarate (alpha-oxoglutarate) across the inner mitochondrial membrane in an electroneutral exchange for malate. Can also exchange 2-oxoglutarate for other dicarboxylic acids such as malonate, succinate, maleate and oxaloacetate, although with lower affinity. Contributes to several metabolic processes, including the malate-aspartate shuttle, the oxoglutarate/isocitrate shuttle, in gluconeogenesis from lactate, and in nitrogen metabolism. Maintains mitochondrial fusion and fission events, and the organization and morphology of cristae. Involved in the regulation of apoptosis. Helps protect from cytotoxic-induced apoptosis by modulating glutathione levels in mitochondria. The chain is Mitochondrial 2-oxoglutarate/malate carrier protein (Slc25a11) from Mus musculus (Mouse).